Here is a 264-residue protein sequence, read N- to C-terminus: uncharacterized protein (264 aa).

This is an uncharacterized protein from Shigella flexneri.